The chain runs to 264 residues: Thymidylate synthase (264 aa).

Arg21 provides a ligand contact to dUMP. Residue His51 coordinates (6R)-5,10-methylene-5,6,7,8-tetrahydrofolate. Residue 126–127 (RR) participates in dUMP binding. Residue Cys146 is the Nucleophile of the active site. DUMP contacts are provided by residues 166–169 (RSCD), Asn177, and 207–209 (HLY). Asp169 is a binding site for (6R)-5,10-methylene-5,6,7,8-tetrahydrofolate. Ala263 serves as a coordination point for (6R)-5,10-methylene-5,6,7,8-tetrahydrofolate.

The protein belongs to the thymidylate synthase family. Bacterial-type ThyA subfamily. Homodimer.

It is found in the cytoplasm. The catalysed reaction is dUMP + (6R)-5,10-methylene-5,6,7,8-tetrahydrofolate = 7,8-dihydrofolate + dTMP. The protein operates within pyrimidine metabolism; dTTP biosynthesis. Its function is as follows. Catalyzes the reductive methylation of 2'-deoxyuridine-5'-monophosphate (dUMP) to 2'-deoxythymidine-5'-monophosphate (dTMP) while utilizing 5,10-methylenetetrahydrofolate (mTHF) as the methyl donor and reductant in the reaction, yielding dihydrofolate (DHF) as a by-product. This enzymatic reaction provides an intracellular de novo source of dTMP, an essential precursor for DNA biosynthesis. This Shigella boydii serotype 4 (strain Sb227) protein is Thymidylate synthase.